A 788-amino-acid chain; its full sequence is Diacylglycerol kinase gamma (788 aa).

Residues 83–93 show a composition bias toward basic and acidic residues; the sequence is PRQETPDHPKE. A disordered region spans residues 83-150; the sequence is PRQETPDHPK…WGEPNAPASS (68 aa). Over residues 95-109 the composition is skewed to polar residues; sequence ASSSEPNVSDSNAES. EF-hand domains follow at residues 172-207 and 217-252; these read RPQDKLEFMFRLYDSDENELLDQAELDQIVSQMLHV and ELRPILKEMLQGMDYNKDGFVSLEEWVSGGMTTIPL. Residues D185, D187, N189, E196, D230, N232, D234, and E241 each contribute to the Ca(2+) site. 2 Phorbol-ester/DAG-type zinc fingers span residues 268–318 and 333–380; these read RHAW…IPGC and QHAW…STAC. In terms of domain architecture, DAGKc spans 427-561; sequence PGTHPLLVLV…LDRWYLEVMP (135 aa). The disordered stretch occupies residues 768–788; that stretch reads MMGPPQKSSFFSLRRKSRSKD.

The protein belongs to the eukaryotic diacylglycerol kinase family. Expressed specifically in brain. Highly expressed in cerebellar Purkinje cells (at protein level).

The protein localises to the membrane. The protein resides in the cytoplasm. It is found in the cytosol. It localises to the cytoskeleton. It carries out the reaction a 1,2-diacyl-sn-glycerol + ATP = a 1,2-diacyl-sn-glycero-3-phosphate + ADP + H(+). The enzyme catalyses 1,2-didecanoyl-sn-glycerol + ATP = 1,2-didecanoyl-sn-glycero-3-phosphate + ADP + H(+). It catalyses the reaction 1,2-di-(9Z-octadecenoyl)-sn-glycerol + ATP = 1,2-di-(9Z-octadecenoyl)-sn-glycero-3-phosphate + ADP + H(+). The catalysed reaction is 1-octadecanoyl-2-(9Z,12Z)-octadecadienoyl-sn-glycerol + ATP = 1-octadecanoyl-2-(9Z,12Z-octadecadienoyl)-sn-glycero-3-phosphate + ADP + H(+). It carries out the reaction 1-octadecanoyl-2-(5Z,8Z,11Z,14Z-eicosatetraenoyl)-sn-glycerol + ATP = 1-octadecanoyl-2-(5Z,8Z,11Z,14Z-eicosatetraenoyl)-sn-glycero-3-phosphate + ADP + H(+). The protein operates within lipid metabolism; glycerolipid metabolism. Its activity is regulated as follows. The activity is calcium-dependent. Requires phosphatidylserine for maximal activity. Functionally, diacylglycerol kinase that converts diacylglycerol/DAG into phosphatidic acid/phosphatidate/PA and regulates the respective levels of these two bioactive lipids. Thereby, acts as a central switch between the signaling pathways activated by these second messengers with different cellular targets and opposite effects in numerous biological processes. Has no apparent specificity with regard to the acyl compositions of diacylglycerol. Specifically expressed in the cerebellum where it controls the level of diacylglycerol which in turn regulates the activity of protein kinase C gamma. Through protein kinase C gamma, indirectly regulates the dendritic development of Purkinje cells, cerebellar long term depression and ultimately cerebellar motor coordination. This chain is Diacylglycerol kinase gamma (Dgkg), found in Rattus norvegicus (Rat).